We begin with the raw amino-acid sequence, 115 residues long: T cell receptor beta variable 12-5 (115 aa).

Positions 1-21 are cleaved as a signal peptide; the sequence is MATRLLCCVVLCLLGEELIDA. The Ig-like domain occupies 22-115; the sequence is RVTQTPRHKV…SAVYFCASGL (94 aa). A disulfide bridge links Cys-42 with Cys-111.

Alpha-beta TR is a heterodimer composed of an alpha and beta chain; disulfide-linked. The alpha-beta TR is associated with the transmembrane signaling CD3 coreceptor proteins to form the TR-CD3 (TcR or TCR). The assembly of alpha-beta TR heterodimers with CD3 occurs in the endoplasmic reticulum where a single alpha-beta TR heterodimer associates with one CD3D-CD3E heterodimer, one CD3G-CD3E heterodimer and one CD247 homodimer forming a stable octameric structure. CD3D-CD3E and CD3G-CD3E heterodimers preferentially associate with TR alpha and TR beta chains, respectively. The association of the CD247 homodimer is the last step of TcR assembly in the endoplasmic reticulum and is required for transport to the cell surface.

The protein resides in the cell membrane. In terms of biological role, v region of the variable domain of T cell receptor (TR) beta chain that participates in the antigen recognition. Alpha-beta T cell receptors are antigen specific receptors which are essential to the immune response and are present on the cell surface of T lymphocytes. Recognize peptide-major histocompatibility (MH) (pMH) complexes that are displayed by antigen presenting cells (APC), a prerequisite for efficient T cell adaptive immunity against pathogens. Binding of alpha-beta TR to pMH complex initiates TR-CD3 clustering on the cell surface and intracellular activation of LCK that phosphorylates the ITAM motifs of CD3G, CD3D, CD3E and CD247 enabling the recruitment of ZAP70. In turn ZAP70 phosphorylates LAT, which recruits numerous signaling molecules to form the LAT signalosome. The LAT signalosome propagates signal branching to three major signaling pathways, the calcium, the mitogen-activated protein kinase (MAPK) kinase and the nuclear factor NF-kappa-B (NF-kB) pathways, leading to the mobilization of transcription factors that are critical for gene expression and essential for T cell growth and differentiation. The T cell repertoire is generated in the thymus, by V-(D)-J rearrangement. This repertoire is then shaped by intrathymic selection events to generate a peripheral T cell pool of self-MH restricted, non-autoaggressive T cells. Post-thymic interaction of alpha-beta TR with the pMH complexes shapes TR structural and functional avidity. This is T cell receptor beta variable 12-5 from Homo sapiens (Human).